The following is a 226-amino-acid chain: Leucyl/phenylalanyl-tRNA--protein transferase (226 aa).

The protein belongs to the L/F-transferase family.

Its subcellular location is the cytoplasm. The catalysed reaction is N-terminal L-lysyl-[protein] + L-leucyl-tRNA(Leu) = N-terminal L-leucyl-L-lysyl-[protein] + tRNA(Leu) + H(+). It carries out the reaction N-terminal L-arginyl-[protein] + L-leucyl-tRNA(Leu) = N-terminal L-leucyl-L-arginyl-[protein] + tRNA(Leu) + H(+). The enzyme catalyses L-phenylalanyl-tRNA(Phe) + an N-terminal L-alpha-aminoacyl-[protein] = an N-terminal L-phenylalanyl-L-alpha-aminoacyl-[protein] + tRNA(Phe). Functions in the N-end rule pathway of protein degradation where it conjugates Leu, Phe and, less efficiently, Met from aminoacyl-tRNAs to the N-termini of proteins containing an N-terminal arginine or lysine. In Bradyrhizobium diazoefficiens (strain JCM 10833 / BCRC 13528 / IAM 13628 / NBRC 14792 / USDA 110), this protein is Leucyl/phenylalanyl-tRNA--protein transferase.